A 409-amino-acid chain; its full sequence is Glycosaminoglycan xylosylkinase (409 aa).

Residues M1–R6 lie on the Cytoplasmic side of the membrane. The helical; Signal-anchor for type II membrane protein transmembrane segment at V7–L25 threads the bilayer. Residues D26–P409 lie on the Lumenal side of the membrane. ATP-binding residues include Q107 and K123. Residue D142 participates in Mn(2+) binding. N193 carries N-linked (GlcNAc...) asparagine glycosylation. 2 cysteine pairs are disulfide-bonded: C196-C211 and C201-C204. T222–L225 lines the ATP pocket. Disulfide bonds link C257-C331 and C332-C389. D289 is a catalytic residue. Positions 294 and 309 each coordinate ATP. Residue D309 coordinates Mn(2+).

The protein belongs to the FAM20 family. It depends on Mn(2+) as a cofactor.

The protein resides in the golgi apparatus membrane. It catalyses the reaction 3-O-(beta-D-galactosyl-(1-&gt;3)-beta-D-galactosyl-(1-&gt;4)-beta-D-xylosyl)-L-seryl-[protein] + ATP = 3-O-(beta-D-galactosyl-(1-&gt;3)-beta-D-galactosyl-(1-&gt;4)-beta-D-2-O-phosphoxylosyl)-L-seryl-[protein] + ADP + H(+). Functionally, responsible for the 2-O-phosphorylation of xylose in the glycosaminoglycan-protein linkage region of proteoglycans thereby regulating the amount of mature GAG chains. Sulfated glycosaminoglycans (GAGs), including heparan sulfate and chondroitin sulfate, are synthesized on the so-called common GAG-protein linkage region (GlcUAbeta1-3Galbeta1-3Galbeta1-4Xylbeta1-O-Ser) of core proteins, which is formed by the stepwise addition of monosaccharide residues by the respective specific glycosyltransferases. The protein is Glycosaminoglycan xylosylkinase of Danio rerio (Zebrafish).